Reading from the N-terminus, the 537-residue chain is Tyrosine-protein kinase Yes (537 aa).

Residues 1–22 (MGCIKSKEDKGPSIKYRTEPKP) show a composition bias toward basic and acidic residues. Residues 1-60 (MGCIKSKEDKGPSIKYRTEPKPDPGSQYGADPTQATQSPGIKGPAPNFNSHSMTPFGGSS) are disordered. The N-myristoyl glycine moiety is linked to residue G2. C3 is lipidated: S-palmitoyl cysteine; in membrane form. Positions 85–146 (GGVTVFVALY…PSNYVAPADS (62 aa)) constitute an SH3 domain. The region spanning 152 to 249 (WYFGKMGRKD…GLCYRLTTVC (98 aa)) is the SH2 domain. A Protein kinase domain is found at 271–524 (LRLDVKLGQG…YIQSFLEDYF (254 aa)). Residues 277–285 (LGQGCFGEV) and K299 each bind ATP. D390 (proton acceptor) is an active-site residue. Position 420 is a phosphotyrosine; by autocatalysis (Y420). At Y531 the chain carries Phosphotyrosine; by CSK.

The protein belongs to the protein kinase superfamily. Tyr protein kinase family. SRC subfamily. Post-translationally, autophosphorylated at Tyr-420 inducing activation. Palmitoylation at Cys-3 promotes membrane localization.

It is found in the cell membrane. It localises to the cytoplasm. The protein resides in the cytoskeleton. Its subcellular location is the microtubule organizing center. The protein localises to the centrosome. It is found in the cytosol. It localises to the cell junction. The enzyme catalyses L-tyrosyl-[protein] + ATP = O-phospho-L-tyrosyl-[protein] + ADP + H(+). Non-receptor protein tyrosine kinase that is involved in the regulation of cell growth and survival, apoptosis, cell-cell adhesion, cytoskeleton remodeling, differentiation, G2/M progression and cytokinesis. This is Tyrosine-protein kinase Yes (yes1) from Xenopus laevis (African clawed frog).